The chain runs to 382 residues: Dual-specificity RNA methyltransferase RlmN (382 aa).

Glu-91 acts as the Proton acceptor in catalysis. Residues 97 to 339 (EEDRGTLCIS…TTIRKTRGDD (243 aa)) form the Radical SAM core domain. Residues Cys-104 and Cys-344 are joined by a disulfide bond. [4Fe-4S] cluster is bound by residues Cys-111, Cys-115, and Cys-118. S-adenosyl-L-methionine-binding positions include 165-166 (GE), Ser-197, 219-221 (SLH), and Asn-301. The active-site S-methylcysteine intermediate is Cys-344.

Belongs to the radical SAM superfamily. RlmN family. The cofactor is [4Fe-4S] cluster.

The protein resides in the cytoplasm. The catalysed reaction is adenosine(2503) in 23S rRNA + 2 reduced [2Fe-2S]-[ferredoxin] + 2 S-adenosyl-L-methionine = 2-methyladenosine(2503) in 23S rRNA + 5'-deoxyadenosine + L-methionine + 2 oxidized [2Fe-2S]-[ferredoxin] + S-adenosyl-L-homocysteine. It catalyses the reaction adenosine(37) in tRNA + 2 reduced [2Fe-2S]-[ferredoxin] + 2 S-adenosyl-L-methionine = 2-methyladenosine(37) in tRNA + 5'-deoxyadenosine + L-methionine + 2 oxidized [2Fe-2S]-[ferredoxin] + S-adenosyl-L-homocysteine. Functionally, specifically methylates position 2 of adenine 2503 in 23S rRNA and position 2 of adenine 37 in tRNAs. m2A2503 modification seems to play a crucial role in the proofreading step occurring at the peptidyl transferase center and thus would serve to optimize ribosomal fidelity. The sequence is that of Dual-specificity RNA methyltransferase RlmN from Albidiferax ferrireducens (strain ATCC BAA-621 / DSM 15236 / T118) (Rhodoferax ferrireducens).